A 95-amino-acid polypeptide reads, in one-letter code: Protein TusB (95 aa).

The protein belongs to the DsrH/TusB family. Heterohexamer, formed by a dimer of trimers. The hexameric TusBCD complex contains 2 copies each of TusB, TusC and TusD. The TusBCD complex interacts with TusE.

Its subcellular location is the cytoplasm. In terms of biological role, part of a sulfur-relay system required for 2-thiolation of 5-methylaminomethyl-2-thiouridine (mnm(5)s(2)U) at tRNA wobble positions. This Escherichia coli O157:H7 protein is Protein TusB.